Here is a 222-residue protein sequence, read N- to C-terminus: Pyrrolidone-carboxylate peptidase (222 aa).

Residues Glu80, Cys146, and His170 contribute to the active site.

It belongs to the peptidase C15 family. As to quaternary structure, homotetramer.

The protein localises to the cytoplasm. The enzyme catalyses Release of an N-terminal pyroglutamyl group from a polypeptide, the second amino acid generally not being Pro.. Functionally, removes 5-oxoproline from various penultimate amino acid residues except L-proline. The polypeptide is Pyrrolidone-carboxylate peptidase (Mycobacterium marinum (strain ATCC BAA-535 / M)).